The sequence spans 181 residues: Translationally-controlled tumor protein homolog (181 aa).

A TCTP domain is found at methionine 1–cysteine 181.

It belongs to the TCTP family.

The protein localises to the cytoplasm. Its function is as follows. Involved in calcium binding and microtubule stabilization. This chain is Translationally-controlled tumor protein homolog (tct-1), found in Caenorhabditis elegans.